The following is a 1122-amino-acid chain: Angiopoietin-1 receptor (1122 aa).

The first 22 residues, 1-22, serve as a signal peptide directing secretion; that stretch reads MDSLAGLVLCGVSLLLYGVVEG. Residues 23–746 lie on the Extracellular side of the membrane; that stretch reads AMDLILINSL…SADLGGGKML (724 aa). The cysteines at positions 44 and 102 are disulfide-linked. Positions 44–123 constitute an Ig-like C2-type 1 domain; that stretch reads CIASGWHPHE…RTMKMRQQAS (80 aa). N-linked (GlcNAc...) asparagine glycans are attached at residues asparagine 140 and asparagine 158. 3 consecutive EGF-like domains span residues 210–252, 254–299, and 301–341; these read RCEA…RTCE, ACEP…LQCN, and ACPS…LQCE. 13 disulfides stabilise this stretch: cysteine 211-cysteine 220, cysteine 224-cysteine 233, cysteine 227-cysteine 240, cysteine 242-cysteine 251, cysteine 255-cysteine 264, cysteine 268-cysteine 274, cysteine 280-cysteine 287, cysteine 289-cysteine 298, cysteine 302-cysteine 311, cysteine 315-cysteine 323, cysteine 317-cysteine 329, cysteine 331-cysteine 340, and cysteine 370-cysteine 424. Residues 350–440 enclose the Ig-like C2-type 2 domain; that stretch reads PQIEDLPDHI…GMVEKPFNIS (91 aa). 7 N-linked (GlcNAc...) asparagine glycosylation sites follow: asparagine 399, asparagine 438, asparagine 464, asparagine 558, asparagine 595, asparagine 648, and asparagine 690. Fibronectin type-III domains are found at residues 444-539, 543-635, and 640-733; these read LPEP…TASI, PPRG…TLSD, and QPEN…TLPH. A helical membrane pass occupies residues 747-767; it reads LIAILGSAGMTCITVLLAFLI. Over 768-1122 the chain is Cytoplasmic; the sequence is MLQLKRANVQ…GIDCSAEEAA (355 aa). The Protein kinase domain maps to 822–1094; sequence IKFQDVIGEG…QILVSLNRML (273 aa). ATP contacts are provided by residues 828-836 and lysine 853; that span reads IGEGNFGQV. Tyrosine 858 carries the phosphotyrosine; by autocatalysis modification. Aspartate 962 (proton acceptor) is an active-site residue. 3 positions are modified to phosphotyrosine; by autocatalysis: tyrosine 990, tyrosine 1100, and tyrosine 1106.

This sequence belongs to the protein kinase superfamily. Tyr protein kinase family. Tie subfamily. As to quaternary structure, homodimer. Heterodimer with TIE1. Interacts with ANGPT1, ANGPT2 and ANGPT4. At cell-cell contacts in quiescent cells, forms a signaling complex composed of ANGPT1 plus TEK molecules from two adjoining cells. In the absence of endothelial cell-cell contacts, interaction with ANGPT1 mediates contacts with the extracellular matrix. Interacts (tyrosine phosphorylated) with TNIP2. Interacts (tyrosine phosphorylated) with SHC1 (via SH2 domain). Interacts with PTPRB; this promotes endothelial cell-cell adhesion. Interacts with DOK2, GRB2, GRB7, GRB14, PIK3R1 and PTPN11/SHP2. Colocalizes with DOK2 at contacts with the extracellular matrix in migrating cells. Proteolytic processing leads to the shedding of the extracellular domain (soluble TIE-2 alias sTIE-2). Post-translationally, autophosphorylated on tyrosine residues in response to ligand binding. Autophosphorylation occurs in trans, i.e. one subunit of the dimeric receptor phosphorylates tyrosine residues on the other subunit. Autophosphorylation occurs in a sequential manner, where Tyr-990 in the kinase activation loop is phosphorylated first, followed by autophosphorylation at Tyr-1106 and at additional tyrosine residues. ANGPT1-induced phosphorylation is impaired during hypoxia, due to increased expression of ANGPT2. Phosphorylation is important for interaction with GRB14, PIK3R1 and PTPN11. Phosphorylation at Tyr-1100 is important for interaction with GRB2 and GRB7. Phosphorylation at Tyr-1106 is important for interaction with DOK2 and for coupling to downstream signal transduction pathways in endothelial cells. Dephosphorylated by PTPRB. In terms of processing, ubiquitinated. The phosphorylated receptor is ubiquitinated and internalized, leading to its degradation. In terms of tissue distribution, specifically expressed in developing vascular endothelial cells. Abundantly expressed in lung and heart, moderately in brain, liver and kidney, and weakly in thymus, spleen and testis.

It is found in the cell membrane. The protein resides in the cell junction. Its subcellular location is the focal adhesion. The protein localises to the cytoplasm. It localises to the cytoskeleton. It is found in the secreted. It catalyses the reaction L-tyrosyl-[protein] + ATP = O-phospho-L-tyrosyl-[protein] + ADP + H(+). With respect to regulation, angiopoietin binding leads to receptor dimerization and activation by autophosphorylation at Tyr-990 on the kinase activation loop. Its function is as follows. Tyrosine-protein kinase that acts as a cell-surface receptor for ANGPT1, ANGPT2 and ANGPT4 and regulates angiogenesis, endothelial cell survival, proliferation, migration, adhesion and cell spreading, reorganization of the actin cytoskeleton, but also maintenance of vascular quiescence. Has anti-inflammatory effects by preventing the leakage of pro-inflammatory plasma proteins and leukocytes from blood vessels. Required for normal angiogenesis and heart development during embryogenesis. Required for postnatal hematopoiesis. After birth, activates or inhibits angiogenesis, depending on the context. Inhibits angiogenesis and promotes vascular stability in quiescent vessels, where endothelial cells have tight contacts. In quiescent vessels, ANGPT1 oligomers recruit TEK to cell-cell contacts, forming complexes with TEK molecules from adjoining cells, and this leads to preferential activation of phosphatidylinositol 3-kinase and the AKT1 signaling cascades. In migrating endothelial cells that lack cell-cell adhesions, ANGT1 recruits TEK to contacts with the extracellular matrix, leading to the formation of focal adhesion complexes, activation of PTK2/FAK and of the downstream kinases MAPK1/ERK2 and MAPK3/ERK1, and ultimately to the stimulation of sprouting angiogenesis. ANGPT1 signaling triggers receptor dimerization and autophosphorylation at specific tyrosine residues that then serve as binding sites for scaffold proteins and effectors. Signaling is modulated by ANGPT2 that has lower affinity for TEK, can promote TEK autophosphorylation in the absence of ANGPT1, but inhibits ANGPT1-mediated signaling by competing for the same binding site. Signaling is also modulated by formation of heterodimers with TIE1, and by proteolytic processing that gives rise to a soluble TEK extracellular domain. The soluble extracellular domain modulates signaling by functioning as decoy receptor for angiopoietins. TEK phosphorylates DOK2, GRB7, GRB14, PIK3R1, SHC1 and TIE1. The protein is Angiopoietin-1 receptor (Tek) of Mus musculus (Mouse).